The sequence spans 82 residues: Immediate early response 3-interacting protein 1 (82 aa).

2 helical membrane passes run alanine 2–leucine 22 and valine 62–glycine 82.

It belongs to the YOS1 family.

Its subcellular location is the endoplasmic reticulum membrane. Its function is as follows. Regulator of endoplasmic reticulum secretion that acts as a key determinant of brain size. Required for secretion of extracellular matrix proteins. Required for correct brain development by depositing sufficient extracellular matrix proteins for tissue integrity and the proliferation of neural progenitors. Acts as a regulator of the unfolded protein response (UPR). The sequence is that of Immediate early response 3-interacting protein 1 from Bos taurus (Bovine).